We begin with the raw amino-acid sequence, 291 residues long: Protease HtpX homolog (291 aa).

The next 2 membrane-spanning stretches (helical) occupy residues 4–24 and 38–58; these read IVLF…SARL and MGML…ISLM. Residue His-144 coordinates Zn(2+). Residue Glu-145 is part of the active site. His-148 is a Zn(2+) binding site. 2 consecutive transmembrane segments (helical) span residues 152 to 172 and 199 to 219; these read GDMV…IFLA and VSSI…VMFF. Residue Glu-224 participates in Zn(2+) binding.

Belongs to the peptidase M48B family. Zn(2+) is required as a cofactor.

The protein localises to the cell inner membrane. The polypeptide is Protease HtpX homolog (Prosthecochloris aestuarii (strain DSM 271 / SK 413)).